A 554-amino-acid chain; its full sequence is Zinc finger protein 426 (554 aa).

Residues 42–112 (VTFDDVAVDF…QGGVLQGWEM (71 aa)) enclose the KRAB domain. A C2H2-type 1; atypical zinc finger spans residues 146–174 (CDCEQCGEVFSEHSCLKTHVRTQSTGNTH). 11 consecutive C2H2-type zinc fingers follow at residues 224-246 (FECS…MRTH), 280-302 (YKCK…MRTH), 308-330 (YECK…GRTH), 336-358 (YVCK…VRSH), 364-386 (YECK…IRTH), 392-414 (FVCV…LRTH), 420-442 (CECK…MRTH), 448-470 (YTCK…MRIH), 476-498 (YECK…ERTH), 504-526 (YECK…EKTH), and 532-554 (YKCQ…EQIH).

Its subcellular location is the nucleus. Its function is as follows. May be involved in transcriptional regulation. This chain is Zinc finger protein 426 (ZNF426), found in Homo sapiens (Human).